The sequence spans 755 residues: Tryptophan 2-monooxygenase (755 aa).

The FMN site is built by serine 247, glutamate 267, lysine 275, and arginine 295. Arginine 295 lines the substrate pocket.

The protein belongs to the tryptophan 2-monooxygenase family. FMN serves as cofactor.

It carries out the reaction L-tryptophan + O2 = indole-3-acetamide + CO2 + H2O. The protein operates within plant hormone metabolism; auxin biosynthesis. This chain is Tryptophan 2-monooxygenase (tms1), found in Agrobacterium tumefaciens (strain Ach5).